The chain runs to 118 residues: uncharacterized protein (118 aa).

This is an uncharacterized protein from Escherichia coli (strain K12).